Consider the following 141-residue polypeptide: Photosystem II protein PSBR, chloroplastic (141 aa).

The N-terminal 27 residues, 1–27 (MATMQISAKGLAPLRPRVSSRRVVKPV), are a transit peptide targeting the chloroplast. 2 positions are modified to phosphothreonine: Thr-34 and Thr-37. Position 43 is a phosphoserine (Ser-43). The chain crosses the membrane as a helical span at residues 114–134 (GLIAWAGLVLVLLAVGVNLII).

Belongs to the psbR family.

The protein resides in the plastid. It is found in the chloroplast thylakoid membrane. Its function is as follows. Associated with the oxygen-evolving complex of photosystem II (PSII). Is required for the stable binding of LHCSR3 to PSII-LHCII supercomplexes and is essential for efficient energy-dependent quenching and the integrity of the PSII-LHCII-LHCSR3 supercomplex under continuous high light. The polypeptide is Photosystem II protein PSBR, chloroplastic (Chlamydomonas reinhardtii (Chlamydomonas smithii)).